We begin with the raw amino-acid sequence, 133 residues long: Small ribosomal subunit protein uS9 (133 aa).

Positions 114 to 133 (VERKKYGKKKARRSPQFSKR) are disordered. Over residues 118–133 (KYGKKKARRSPQFSKR) the composition is skewed to basic residues.

This sequence belongs to the universal ribosomal protein uS9 family.

The sequence is that of Small ribosomal subunit protein uS9 from Fusobacterium nucleatum subsp. nucleatum (strain ATCC 25586 / DSM 15643 / BCRC 10681 / CIP 101130 / JCM 8532 / KCTC 2640 / LMG 13131 / VPI 4355).